Consider the following 110-residue polypeptide: Nucleoid-associated protein CbuK_1603 (110 aa).

The protein belongs to the YbaB/EbfC family. Homodimer.

Its subcellular location is the cytoplasm. It localises to the nucleoid. Its function is as follows. Binds to DNA and alters its conformation. May be involved in regulation of gene expression, nucleoid organization and DNA protection. This Coxiella burnetii (strain CbuK_Q154) (Coxiella burnetii (strain Q154)) protein is Nucleoid-associated protein CbuK_1603.